We begin with the raw amino-acid sequence, 475 residues long: Ribulose bisphosphate carboxylase large chain (475 aa).

Residues 1–2 constitute a propeptide that is removed on maturation; the sequence is MS. P3 carries the post-translational modification N-acetylproline. Substrate is bound by residues T65, N123, and T173. K175 (proton acceptor) is an active-site residue. Position 177 (K177) interacts with substrate. Positions 201, 203, and 204 each coordinate Mg(2+). K201 bears the N6-carboxylysine mark. E204, H294, R295, H327, K334, S379, G381, G403, and G404 together coordinate substrate. Residue H294 is the Proton acceptor of the active site.

It belongs to the RuBisCO large chain family. Type I subfamily. Heterohexadecamer of 8 large chains and 8 small chains. Mg(2+) is required as a cofactor. Post-translationally, the disulfide bond which can form between Cys-247 in the large chain dimeric partners within the hexadecamer appears to be associated with oxidative stress and protein turnover. The disulfide bonds reported in 1RBO may be the result of oxidation during crystallization.

The protein resides in the plastid. It is found in the chloroplast. The enzyme catalyses 2 (2R)-3-phosphoglycerate + 2 H(+) = D-ribulose 1,5-bisphosphate + CO2 + H2O. It carries out the reaction D-ribulose 1,5-bisphosphate + O2 = 2-phosphoglycolate + (2R)-3-phosphoglycerate + 2 H(+). With respect to regulation, abscisic acid (ABA) causes weak inhibition of RuBisCO catalytic activity, but more potent inhibition of RuBisCO activation. RuBisCO catalyzes two reactions: the carboxylation of D-ribulose 1,5-bisphosphate, the primary event in carbon dioxide fixation, as well as the oxidative fragmentation of the pentose substrate in the photorespiration process. Both reactions occur simultaneously and in competition at the same active site. Binds to abscisic acid (ABA) which has weakly inhibits carboxylation and more strongly inhibits enzyme activation. In Spinacia oleracea (Spinach), this protein is Ribulose bisphosphate carboxylase large chain.